A 313-amino-acid chain; its full sequence is tRNA dimethylallyltransferase (313 aa).

9–16 (GPTAVGKT) is an ATP binding site. Residue 11–16 (TAVGKT) participates in substrate binding. Positions 34-37 (DSMQ) are interaction with substrate tRNA.

This sequence belongs to the IPP transferase family. Monomer. The cofactor is Mg(2+).

It catalyses the reaction adenosine(37) in tRNA + dimethylallyl diphosphate = N(6)-dimethylallyladenosine(37) in tRNA + diphosphate. In terms of biological role, catalyzes the transfer of a dimethylallyl group onto the adenine at position 37 in tRNAs that read codons beginning with uridine, leading to the formation of N6-(dimethylallyl)adenosine (i(6)A). This chain is tRNA dimethylallyltransferase, found in Lachnoclostridium phytofermentans (strain ATCC 700394 / DSM 18823 / ISDg) (Clostridium phytofermentans).